A 463-amino-acid chain; its full sequence is Phosphomannomutase/phosphoglucomutase (463 aa).

The active-site Phosphoserine intermediate is the Ser-108. Residues Ser-108, Asp-242, Asp-244, and Asp-246 each coordinate Mg(2+). Residues Glu-325, Ser-327, and His-329 each coordinate substrate.

It belongs to the phosphohexose mutase family. In terms of assembly, monomer. The cofactor is Mg(2+).

It carries out the reaction alpha-D-mannose 1-phosphate = D-mannose 6-phosphate. It catalyses the reaction alpha-D-glucose 1-phosphate = alpha-D-glucose 6-phosphate. Its pathway is nucleotide-sugar biosynthesis; GDP-alpha-D-mannose biosynthesis; alpha-D-mannose 1-phosphate from D-fructose 6-phosphate: step 2/2. It participates in bacterial outer membrane biogenesis; lipopolysaccharide biosynthesis. In terms of biological role, the phosphomannomutase activity produces a precursor for alginate polymerization. The alginate layer causes a mucoid phenotype and provides a protective barrier against host immune defenses and antibiotics. Also involved in core-LPS biosynthesis due to its phosphoglucomutase activity. Essential for biofilm production. The sequence is that of Phosphomannomutase/phosphoglucomutase (algC) from Pseudomonas putida (strain ATCC 47054 / DSM 6125 / CFBP 8728 / NCIMB 11950 / KT2440).